We begin with the raw amino-acid sequence, 209 residues long: Kynurenine formamidase (209 aa).

W20 serves as a coordination point for substrate. Zn(2+) is bound by residues H50, H54, and D56. Residue H60 is the Proton donor/acceptor of the active site. Positions 161 and 173 each coordinate Zn(2+).

Belongs to the Cyclase 1 superfamily. KynB family. In terms of assembly, homodimer. Zn(2+) serves as cofactor.

It carries out the reaction N-formyl-L-kynurenine + H2O = L-kynurenine + formate + H(+). Its pathway is amino-acid degradation; L-tryptophan degradation via kynurenine pathway; L-kynurenine from L-tryptophan: step 2/2. In terms of biological role, catalyzes the hydrolysis of N-formyl-L-kynurenine to L-kynurenine, the second step in the kynurenine pathway of tryptophan degradation. The polypeptide is Kynurenine formamidase (Bacillus cereus (strain ATCC 14579 / DSM 31 / CCUG 7414 / JCM 2152 / NBRC 15305 / NCIMB 9373 / NCTC 2599 / NRRL B-3711)).